The following is a 678-amino-acid chain: NADPH--cytochrome P450 reductase (678 aa).

An N-acetylglycine modification is found at glycine 2. Residues 2-21 lie on the Lumenal side of the membrane; sequence GDSHVDTGATSTEAVAEEVS. A helical membrane pass occupies residues 22 to 42; that stretch reads LFSMTDMILLSVLVGFLTYFF. Over 43–678 the chain is Cytoplasmic; it reads LFRKKKEEIP…KGRYSLDVWS (636 aa). Phosphoserine is present on serine 63. In terms of domain architecture, Flavodoxin-like spans 80–224; that stretch reads IIVFYGSQTG…DFITWREQFW (145 aa). Residues 86–91, 138–141, 173–182, and aspartate 208 contribute to the FMN site; these read SQTGTA, ATYG, and LGNKTYEHFN. In terms of domain architecture, FAD-binding FR-type spans 279–521; sequence KNPFLAAVTT…FVRKSQFRLP (243 aa). Arginine 298 contributes to the NADP(+) binding site. Residues arginine 424, 454–457, 472–474, tyrosine 478, and 488–491 contribute to the FAD site; these read RYYS, CAV, and GVAT. NADP(+) is bound by residues threonine 535, 596-597, 602-606, and aspartate 639; these read SR and KVYVQ. Tryptophan 677 lines the FAD pocket.

Belongs to the NADPH--cytochrome P450 reductase family. It in the N-terminal section; belongs to the flavodoxin family. This sequence in the C-terminal section; belongs to the flavoprotein pyridine nucleotide cytochrome reductase family. It depends on FAD as a cofactor. The cofactor is FMN.

It localises to the endoplasmic reticulum membrane. The catalysed reaction is 2 oxidized [cytochrome P450] + NADPH = 2 reduced [cytochrome P450] + NADP(+) + H(+). In terms of biological role, this enzyme is required for electron transfer from NADP to cytochrome P450 in microsomes. It can also provide electron transfer to heme oxygenase and cytochrome B5. The chain is NADPH--cytochrome P450 reductase from Cavia porcellus (Guinea pig).